The chain runs to 304 residues: Homoserine O-acetyltransferase (304 aa).

The active-site Acyl-thioester intermediate is the Cys142. The substrate site is built by Lys163 and Ser191. The active-site Proton acceptor is the His234. Glu236 is a catalytic residue. Arg248 is a substrate binding site.

It belongs to the MetA family.

It is found in the cytoplasm. The catalysed reaction is L-homoserine + acetyl-CoA = O-acetyl-L-homoserine + CoA. It participates in amino-acid biosynthesis; L-methionine biosynthesis via de novo pathway; O-acetyl-L-homoserine from L-homoserine: step 1/1. In terms of biological role, transfers an acetyl group from acetyl-CoA to L-homoserine, forming acetyl-L-homoserine. This Thermotoga petrophila (strain ATCC BAA-488 / DSM 13995 / JCM 10881 / RKU-1) protein is Homoserine O-acetyltransferase.